Reading from the N-terminus, the 51-residue chain is Photosystem I reaction center subunit IX (51 aa).

Residues 17–37 (FFSTAPVIALVFFTLTAGFLV) form a helical membrane-spanning segment.

Belongs to the PsaJ family.

It is found in the cellular thylakoid membrane. In terms of biological role, may help in the organization of the PsaE and PsaF subunits. In Acaryochloris marina (strain MBIC 11017), this protein is Photosystem I reaction center subunit IX.